Reading from the N-terminus, the 487-residue chain is GlcNAc-binding protein A (487 aa).

Residues methionine 1 to alanine 29 form the signal peptide. The region spanning tyrosine 30–phenylalanine 201 is the Chitin-binding type-4 domain. Positions alanine 438–tryptophan 479 constitute a Chitin-binding type-3 domain.

The protein belongs to the GbpA family.

Its subcellular location is the secreted. In terms of biological role, probably interacts with GlcNAc residues. May promote attachment to both epithelial cell surfaces and chitin. This Vibrio campbellii (strain ATCC BAA-1116) protein is GlcNAc-binding protein A.